Here is a 499-residue protein sequence, read N- to C-terminus: D-alanine--D-alanyl carrier protein ligase (499 aa).

152–153 (TS) is an ATP binding site. Asp197 is a binding site for D-alanine. Residues 292-297 (NTYGPT), Asp372, 384-387 (YQGR), and Lys485 contribute to the ATP site. A D-alanine-binding site is contributed by Lys485.

The protein belongs to the ATP-dependent AMP-binding enzyme family. DltA subfamily.

Its subcellular location is the cytoplasm. It catalyses the reaction holo-[D-alanyl-carrier protein] + D-alanine + ATP = D-alanyl-[D-alanyl-carrier protein] + AMP + diphosphate. The protein operates within cell wall biogenesis; lipoteichoic acid biosynthesis. Functionally, catalyzes the first step in the D-alanylation of lipoteichoic acid (LTA), the activation of D-alanine and its transfer onto the D-alanyl carrier protein (Dcp) DltC. In an ATP-dependent two-step reaction, forms a high energy D-alanyl-AMP intermediate, followed by transfer of the D-alanyl residue as a thiol ester to the phosphopantheinyl prosthetic group of the Dcp. D-alanylation of LTA plays an important role in modulating the properties of the cell wall in Gram-positive bacteria, influencing the net charge of the cell wall. The polypeptide is D-alanine--D-alanyl carrier protein ligase (Lactococcus lactis subsp. lactis (strain IL1403) (Streptococcus lactis)).